Consider the following 217-residue polypeptide: Phosphate-specific transport system accessory protein PhoU homolog 2 (217 aa).

The protein belongs to the PhoU family. In terms of assembly, homodimer.

Its subcellular location is the cytoplasm. Plays a role in the regulation of phosphate uptake. The polypeptide is Phosphate-specific transport system accessory protein PhoU homolog 2 (Methanothermobacter thermautotrophicus (strain ATCC 29096 / DSM 1053 / JCM 10044 / NBRC 100330 / Delta H) (Methanobacterium thermoautotrophicum)).